Reading from the N-terminus, the 388-residue chain is Chorismate synthase (388 aa).

The NADP(+) site is built by Arg-39 and Arg-45. Residues 132–134 (RSS), 251–252 (NA), Gly-296, 311–315 (KPIPT), and Arg-337 each bind FMN.

The protein belongs to the chorismate synthase family. In terms of assembly, homotetramer. FMNH2 is required as a cofactor.

The catalysed reaction is 5-O-(1-carboxyvinyl)-3-phosphoshikimate = chorismate + phosphate. The protein operates within metabolic intermediate biosynthesis; chorismate biosynthesis; chorismate from D-erythrose 4-phosphate and phosphoenolpyruvate: step 7/7. Its function is as follows. Catalyzes the anti-1,4-elimination of the C-3 phosphate and the C-6 proR hydrogen from 5-enolpyruvylshikimate-3-phosphate (EPSP) to yield chorismate, which is the branch point compound that serves as the starting substrate for the three terminal pathways of aromatic amino acid biosynthesis. This reaction introduces a second double bond into the aromatic ring system. This chain is Chorismate synthase, found in Staphylococcus aureus (strain bovine RF122 / ET3-1).